The sequence spans 70 residues: UPF0519 protein B (70 aa).

It belongs to the UPF0519 family.

This Dictyostelium discoideum (Social amoeba) protein is UPF0519 protein B (sigN122).